The primary structure comprises 369 residues: Type 2 DNA topoisomerase 6 subunit A (369 aa).

Residues Gln11 to Ala149 form the Topo IIA-type catalytic domain. The active-site O-(5'-phospho-DNA)-tyrosine intermediate is Tyr106. Mg(2+) is bound by residues Glu202 and Asp254.

This sequence belongs to the TOP6A family. Homodimer. Heterotetramer of two Top6A and two Top6B chains. Requires Mg(2+) as cofactor.

It carries out the reaction ATP-dependent breakage, passage and rejoining of double-stranded DNA.. In terms of biological role, relaxes both positive and negative superturns and exhibits a strong decatenase activity. This is Type 2 DNA topoisomerase 6 subunit A from Methanosarcina barkeri (strain Fusaro / DSM 804).